A 662-amino-acid chain; its full sequence is UPF0313 protein CPE1196 (662 aa).

Positions 296–567 constitute a Radical SAM core domain; that stretch reads AIEEVKFSLV…AMQRALLQFK (272 aa). [4Fe-4S] cluster is bound by residues cysteine 310, cysteine 314, and cysteine 317. The tract at residues 597 to 662 is disordered; the sequence is RDKNSFGKGN…QRGSKGKKRR (66 aa). A compositionally biased stretch (basic and acidic residues) spans 618 to 632; it reads NRNENSGRRESEDKK. Positions 633-644 are enriched in basic residues; the sequence is RSSHSKKQRGNK.

This sequence belongs to the UPF0313 family. The cofactor is [4Fe-4S] cluster.

The polypeptide is UPF0313 protein CPE1196 (Clostridium perfringens (strain 13 / Type A)).